The sequence spans 718 residues: Phenylalanine--tRNA ligase beta subunit (718 aa).

Residues 40–153 (FLNVSKIKFG…KADLKQDPID (114 aa)) enclose the tRNA-binding domain. The 76-residue stretch at 387–462 (DKKESFNFVW…RFYGYENLVF (76 aa)) folds into the B5 domain. Mg(2+) contacts are provided by Asp440, Asp446, Glu449, and Glu450.

The protein belongs to the phenylalanyl-tRNA synthetase beta subunit family. Type 1 subfamily. In terms of assembly, tetramer of two alpha and two beta subunits. The cofactor is Mg(2+).

Its subcellular location is the cytoplasm. The enzyme catalyses tRNA(Phe) + L-phenylalanine + ATP = L-phenylalanyl-tRNA(Phe) + AMP + diphosphate + H(+). The sequence is that of Phenylalanine--tRNA ligase beta subunit from Mycoplasmopsis pulmonis (strain UAB CTIP) (Mycoplasma pulmonis).